An 898-amino-acid chain; its full sequence is Cip1-interacting zinc finger protein (898 aa).

Disordered stretches follow at residues 48–69 (QAPL…QPLL), 157–305 (QSLL…ALEA), and 318–471 (VQAQ…QPQV). Positions 170-203 (NPSQFNLSGRNPQKQARTSSSTTPNRKDSSSQTM) are enriched in polar residues. Serine 209 bears the Phosphoserine mark. Threonine 244 is subject to Phosphothreonine. The span at 263 to 273 (RSSEEPTEKEP) shows a compositional bias: basic and acidic residues. Residue lysine 280 forms a Glycyl lysine isopeptide (Lys-Gly) (interchain with G-Cter in SUMO2) linkage. The segment covering 318–327 (VQAQVQSQTQ) has biased composition (low complexity). A compositionally biased stretch (polar residues) spans 328 to 351 (PRIPSTDTQVQPKLQKQAQTQTSP). Residue lysine 340 forms a Glycyl lysine isopeptide (Lys-Gly) (interchain with G-Cter in SUMO2) linkage. Phosphoserine is present on serine 350. The segment covering 355–383 (VLQQKQVQPQLQQEAEPQKQVQPQVQPQA) has biased composition (low complexity). Polar residues predominate over residues 384-395 (HSQGPRQVQLQQ). Lysine 401 is covalently cross-linked (Glycyl lysine isopeptide (Lys-Gly) (interchain with G-Cter in SUMO2)). Low complexity predominate over residues 402-435 (QVQPQVQPQAHSQPPRQVQLQLQKQVQTQTYPQV). Positions 436–445 (HTQAQPSVQP) are enriched in polar residues. Serine 547 is modified (phosphoserine). Lysine 549 participates in a covalent cross-link: Glycyl lysine isopeptide (Lys-Gly) (interchain with G-Cter in SUMO2). Residues 562-584 (STVPLTPVPRPSDSVSSTPAATS) are disordered. Phosphothreonine is present on threonine 567. A compositionally biased stretch (low complexity) spans 572-584 (PSDSVSSTPAATS). Residues lysine 588, lysine 680, and lysine 705 each participate in a glycyl lysine isopeptide (Lys-Gly) (interchain with G-Cter in SUMO2) cross-link. The Matrin-type zinc-finger motif lies at 799 to 830 (YICRICHKFYHSNSGAQLSHCKSLGHFENLQK). Serine 821 carries the post-translational modification Phosphoserine. Residue lysine 830 forms a Glycyl lysine isopeptide (Lys-Gly) (interchain with G-Cter in SUMO2) linkage. Position 838 is a phosphoserine (serine 838). Residues 859–879 (LFTSSGRPPSQPNTQDKTPSK) are compositionally biased toward polar residues. The segment at 859 to 898 (LFTSSGRPPSQPNTQDKTPSKVTARPSQPPLPRRSTRLKT) is disordered. Lysine 879 is covalently cross-linked (Glycyl lysine isopeptide (Lys-Gly) (interchain with G-Cter in SUMO2)).

Interacts with CIP/WAF1.

Its subcellular location is the nucleus. May regulate the subcellular localization of CIP/WAF1. The protein is Cip1-interacting zinc finger protein (CIZ1) of Homo sapiens (Human).